A 189-amino-acid chain; its full sequence is Cancer/testis antigen family 45 member A10 (189 aa).

The protein belongs to the CT45 family.

Its subcellular location is the nucleus. The chain is Cancer/testis antigen family 45 member A10 from Homo sapiens (Human).